Here is an 87-residue protein sequence, read N- to C-terminus: UPF0250 protein NT01EI_2946 (87 aa).

This sequence belongs to the UPF0250 family.

The polypeptide is UPF0250 protein NT01EI_2946 (Edwardsiella ictaluri (strain 93-146)).